The following is a 266-amino-acid chain: Glucosamine-6-phosphate deaminase (266 aa).

The active-site Proton acceptor; for enolization step is Asp72. The active-site For ring-opening step is Asp141. The Proton acceptor; for ring-opening step role is filled by His143. Glu148 functions as the For ring-opening step in the catalytic mechanism.

This sequence belongs to the glucosamine/galactosamine-6-phosphate isomerase family. NagB subfamily. As to quaternary structure, homohexamer.

The enzyme catalyses alpha-D-glucosamine 6-phosphate + H2O = beta-D-fructose 6-phosphate + NH4(+). It functions in the pathway amino-sugar metabolism; N-acetylneuraminate degradation; D-fructose 6-phosphate from N-acetylneuraminate: step 5/5. Allosterically activated by N-acetylglucosamine 6-phosphate (GlcNAc6P). Functionally, catalyzes the reversible isomerization-deamination of glucosamine 6-phosphate (GlcN6P) to form fructose 6-phosphate (Fru6P) and ammonium ion. The chain is Glucosamine-6-phosphate deaminase from Aeromonas salmonicida (strain A449).